Here is a 119-residue protein sequence, read N- to C-terminus: Phosphoribosyl-AMP cyclohydrolase (119 aa).

Mg(2+) is bound at residue Asp72. Cys73 is a binding site for Zn(2+). Residues Asp74 and Asp76 each contribute to the Mg(2+) site. The Zn(2+) site is built by Cys89 and Cys96.

This sequence belongs to the PRA-CH family. In terms of assembly, homodimer. Requires Mg(2+) as cofactor. It depends on Zn(2+) as a cofactor.

The protein resides in the cytoplasm. It carries out the reaction 1-(5-phospho-beta-D-ribosyl)-5'-AMP + H2O = 1-(5-phospho-beta-D-ribosyl)-5-[(5-phospho-beta-D-ribosylamino)methylideneamino]imidazole-4-carboxamide. It functions in the pathway amino-acid biosynthesis; L-histidine biosynthesis; L-histidine from 5-phospho-alpha-D-ribose 1-diphosphate: step 3/9. Its function is as follows. Catalyzes the hydrolysis of the adenine ring of phosphoribosyl-AMP. This chain is Phosphoribosyl-AMP cyclohydrolase, found in Methanocella arvoryzae (strain DSM 22066 / NBRC 105507 / MRE50).